We begin with the raw amino-acid sequence, 208 residues long: ATP-dependent Clp protease proteolytic subunit (208 aa).

The active-site Nucleophile is the serine 101. The active site involves histidine 126.

Belongs to the peptidase S14 family. As to quaternary structure, component of the chloroplastic Clp protease core complex.

The protein localises to the plastid. The protein resides in the chloroplast stroma. The catalysed reaction is Hydrolysis of proteins to small peptides in the presence of ATP and magnesium. alpha-casein is the usual test substrate. In the absence of ATP, only oligopeptides shorter than five residues are hydrolyzed (such as succinyl-Leu-Tyr-|-NHMec, and Leu-Tyr-Leu-|-Tyr-Trp, in which cleavage of the -Tyr-|-Leu- and -Tyr-|-Trp bonds also occurs).. Functionally, cleaves peptides in various proteins in a process that requires ATP hydrolysis. Has a chymotrypsin-like activity. Plays a major role in the degradation of misfolded proteins. The polypeptide is ATP-dependent Clp protease proteolytic subunit (Nephroselmis olivacea (Green alga)).